The chain runs to 354 residues: Methylthioribose-1-phosphate isomerase (354 aa).

Substrate contacts are provided by residues 58-60 (RGA), R101, and Q204. The active-site Proton donor is D245. 255–256 (NK) provides a ligand contact to substrate.

It belongs to the eIF-2B alpha/beta/delta subunits family. MtnA subfamily.

It carries out the reaction 5-(methylsulfanyl)-alpha-D-ribose 1-phosphate = 5-(methylsulfanyl)-D-ribulose 1-phosphate. The protein operates within amino-acid biosynthesis; L-methionine biosynthesis via salvage pathway; L-methionine from S-methyl-5-thio-alpha-D-ribose 1-phosphate: step 1/6. In terms of biological role, catalyzes the interconversion of methylthioribose-1-phosphate (MTR-1-P) into methylthioribulose-1-phosphate (MTRu-1-P). The polypeptide is Methylthioribose-1-phosphate isomerase (Xanthomonas axonopodis pv. citri (strain 306)).